An 880-amino-acid polypeptide reads, in one-letter code: Translation initiation factor IF-2 (880 aa).

The interval 259 to 281 (KNREEARAVGRSSKSQSKRKSST) is disordered. The region spanning 379 to 548 (SRAPVVTIMG…LLQAEVLELK (170 aa)) is the tr-type G domain. The segment at 388 to 395 (GHVDHGKT) is G1. 388–395 (GHVDHGKT) provides a ligand contact to GTP. Residues 413–417 (GITQH) form a G2 region. Positions 434–437 (DTPG) are G3. GTP is bound by residues 434-438 (DTPGH) and 488-491 (NKID). The interval 488 to 491 (NKID) is G4. Residues 524 to 526 (SAK) form a G5 region.

This sequence belongs to the TRAFAC class translation factor GTPase superfamily. Classic translation factor GTPase family. IF-2 subfamily.

Its subcellular location is the cytoplasm. In terms of biological role, one of the essential components for the initiation of protein synthesis. Protects formylmethionyl-tRNA from spontaneous hydrolysis and promotes its binding to the 30S ribosomal subunits. Also involved in the hydrolysis of GTP during the formation of the 70S ribosomal complex. This chain is Translation initiation factor IF-2, found in Baumannia cicadellinicola subsp. Homalodisca coagulata.